A 153-amino-acid polypeptide reads, in one-letter code: Fimbrial protein EcpC (153 aa).

Residues Met1–Gly8 constitute a propeptide, leader sequence. Phe9 is subject to N-methylphenylalanine. A helical membrane pass occupies residues Phe9–Leu29. Cys130 and Cys143 are oxidised to a cystine.

It belongs to the N-Me-Phe pilin family.

It is found in the fimbrium. Its subcellular location is the membrane. The chain is Fimbrial protein EcpC (ecpC) from Eikenella corrodens.